Here is a 356-residue protein sequence, read N- to C-terminus: S-adenosylmethionine:tRNA ribosyltransferase-isomerase (356 aa).

This sequence belongs to the QueA family. As to quaternary structure, monomer.

It localises to the cytoplasm. The catalysed reaction is 7-aminomethyl-7-carbaguanosine(34) in tRNA + S-adenosyl-L-methionine = epoxyqueuosine(34) in tRNA + adenine + L-methionine + 2 H(+). Its pathway is tRNA modification; tRNA-queuosine biosynthesis. Its function is as follows. Transfers and isomerizes the ribose moiety from AdoMet to the 7-aminomethyl group of 7-deazaguanine (preQ1-tRNA) to give epoxyqueuosine (oQ-tRNA). This Escherichia coli O8 (strain IAI1) protein is S-adenosylmethionine:tRNA ribosyltransferase-isomerase.